Here is a 364-residue protein sequence, read N- to C-terminus: Peptide chain release factor 2 (364 aa).

The residue at position 251 (Gln251) is an N5-methylglutamine.

Belongs to the prokaryotic/mitochondrial release factor family. Post-translationally, methylated by PrmC. Methylation increases the termination efficiency of RF2.

It is found in the cytoplasm. Functionally, peptide chain release factor 2 directs the termination of translation in response to the peptide chain termination codons UGA and UAA. The chain is Peptide chain release factor 2 from Sulfurovum sp. (strain NBC37-1).